The chain runs to 257 residues: Acetylglutamate kinase (257 aa).

Substrate-binding positions include 43 to 44 (GG), arginine 65, and asparagine 157. ATP is bound by residues 180–185 (DVSGIL) and 208–210 (IIT).

Belongs to the acetylglutamate kinase family. ArgB subfamily. Homodimer.

The protein resides in the cytoplasm. The enzyme catalyses N-acetyl-L-glutamate + ATP = N-acetyl-L-glutamyl 5-phosphate + ADP. It functions in the pathway amino-acid biosynthesis; L-arginine biosynthesis; N(2)-acetyl-L-ornithine from L-glutamate: step 2/4. Its function is as follows. Catalyzes the ATP-dependent phosphorylation of N-acetyl-L-glutamate. This is Acetylglutamate kinase from Edwardsiella ictaluri (strain 93-146).